Consider the following 187-residue polypeptide: Probable cobalt-precorrin-6B C(15)-methyltransferase (decarboxylating) (187 aa).

Residues Thr-17, Gly-41–Gly-45, Asp-62, and Gly-91 each bind S-adenosyl-L-methionine.

This sequence belongs to the methyltransferase superfamily. Archaeal-type CbiT family.

The catalysed reaction is Co-precorrin-6B + S-adenosyl-L-methionine = Co-precorrin-7 + S-adenosyl-L-homocysteine + CO2. It functions in the pathway cofactor biosynthesis; adenosylcobalamin biosynthesis; cob(II)yrinate a,c-diamide from sirohydrochlorin (anaerobic route): step 8/10. Functionally, catalyzes the methylation of C-15 in cobalt-precorrin-6B followed by the decarboxylation of C-12 to form cobalt-precorrin-7. In Methanobrevibacter smithii (strain ATCC 35061 / DSM 861 / OCM 144 / PS), this protein is Probable cobalt-precorrin-6B C(15)-methyltransferase (decarboxylating).